We begin with the raw amino-acid sequence, 204 residues long: LexA repressor (204 aa).

The segment at residues 27-47 (VREIGEAVGLASSSTVHGHLA) is a DNA-binding region (H-T-H motif). Catalysis depends on for autocatalytic cleavage activity residues S126 and K164.

It belongs to the peptidase S24 family. As to quaternary structure, homodimer.

It carries out the reaction Hydrolysis of Ala-|-Gly bond in repressor LexA.. Its function is as follows. Represses a number of genes involved in the response to DNA damage (SOS response), including recA and lexA. In the presence of single-stranded DNA, RecA interacts with LexA causing an autocatalytic cleavage which disrupts the DNA-binding part of LexA, leading to derepression of the SOS regulon and eventually DNA repair. This chain is LexA repressor, found in Listeria monocytogenes serotype 4b (strain CLIP80459).